Here is a 261-residue protein sequence, read N- to C-terminus: MIYKCPMCREFFSERADLFMHQKIHTAEKPHKCDKCDKGFFHISELHIHWRDHTGEKVYKCDDCVKDFSTTTKLNRHKKIHTVEKPYKCYECGKAFNWSSHLQIHMRVHTGEKPYVCSECGRGFSNSSNLCMHQRVHTGEKPFKCEECGKAFRHTSSLCMHQRVHTGEKPYKCYECGKAFSQSSSLCIHQRVHTGEKPYRCCGCGKAFSQSSSLCIHQRVHTGEKPFKCDECGKAFSQSTSLCIHQRVHTKERNHLKISVI.

9 C2H2-type zinc fingers span residues 3 to 25 (YKCP…QKIH), 31 to 53 (HKCD…WRDH), 59 to 81 (YKCD…KKIH), 87 to 109 (YKCY…MRVH), 115 to 137 (YVCS…QRVH), 143 to 165 (FKCE…QRVH), 171 to 193 (YKCY…QRVH), 199 to 221 (YRCC…QRVH), and 227 to 249 (FKCD…QRVH). K257 is covalently cross-linked (Glycyl lysine isopeptide (Lys-Gly) (interchain with G-Cter in SUMO2)).

Belongs to the krueppel C2H2-type zinc-finger protein family.

It localises to the nucleus. Its function is as follows. May be involved in transcriptional regulation. The polypeptide is Zinc finger protein 664 (Znf664) (Mus musculus (Mouse)).